Here is a 325-residue protein sequence, read N- to C-terminus: Protease HtpX homolog (325 aa).

The helical transmembrane segment at 20–40 (IGYLLGGGGGMMIALVIAVAM) threads the bilayer. H130 lines the Zn(2+) pocket. The active site involves E131. H134 contributes to the Zn(2+) binding site. The next 2 membrane-spanning stretches (helical) occupy residues 145–165 (IVAT…FLGG) and 173–193 (VMGV…AMIV). E202 contacts Zn(2+). Positions 288-325 (AMTARAAAPSQNSGPWGQRSDNAGGNSNGGSRYRGPWS) are disordered. Residues 306–325 (RSDNAGGNSNGGSRYRGPWS) show a composition bias toward low complexity.

This sequence belongs to the peptidase M48B family. Zn(2+) serves as cofactor.

Its subcellular location is the cell inner membrane. This Brucella suis (strain ATCC 23445 / NCTC 10510) protein is Protease HtpX homolog.